Reading from the N-terminus, the 1095-residue chain is Formin-like protein 2 (1095 aa).

A GBD/FH3 domain is found at 23 to 469 (LPMPEPGELE…EAIQRQSTLE (447 aa)). A coiled-coil region spans residues 381–478 (LLEDAETKNA…EKKIHELEKQ (98 aa)). The tract at residues 521-602 (PSSGPLPPPP…PSAPPLPGTS (82 aa)) is disordered. 3 stretches are compositionally biased toward pro residues: residues 524–534 (GPLPPPPPPLP), 548–576 (ATPPVPPPPPPPPPPPPPPPPPPPPPLPG), and 583–599 (PAPPLPPPPPPSAPPLP). The 392-residue stretch at 617-1008 (IKKPIKTKFR…LMEKLLEQEA (392 aa)) folds into the FH2 domain.

It belongs to the formin homology family. Interacts with TCP11L2; this interaction promotes muscle-derived satellite cell (MDSC) migration and differentiation.

It localises to the cytoplasm. Its function is as follows. Plays a role in the regulation of cell morphology and cytoskeletal organization. Required in the cortical actin filament dynamics. The chain is Formin-like protein 2 from Bos taurus (Bovine).